Reading from the N-terminus, the 81-residue chain is Insulin-like growth factor 1 (81 aa).

Residues 1–4 (FASA) constitute a propeptide that is removed on maturation. Residues 5-33 (GPETLCGAELVDALQFVCGDRGFYFNKPT) are b. Intrachain disulfides connect Cys10–Cys52, Cys22–Cys65, and Cys51–Cys56. The c stretch occupies residues 34 to 45 (GYGSSSRRAPQT). The interval 46 to 66 (GIVDECCFRSCDLRRLEMYCA) is a. The tract at residues 67–74 (PLKPAKAA) is d. A propeptide spans 75–81 (RSVRAQR) (e peptide).

This sequence belongs to the insulin family. Forms a ternary complex with IGFR1 and ITGAV:ITGB3. Forms a ternary complex with IGFR1 and ITGA6:ITGB4.

The protein resides in the secreted. The insulin-like growth factors, isolated from plasma, are structurally and functionally related to insulin but have a much higher growth-promoting activity. May be a physiological regulator of [1-14C]-2-deoxy-D-glucose (2DG) transport and glycogen synthesis in osteoblasts. Stimulates glucose transport in bone-derived osteoblastic (PyMS) cells and is effective at much lower concentrations than insulin, not only regarding glycogen and DNA synthesis but also with regard to enhancing glucose uptake. May play a role in synapse maturation. Ca(2+)-dependent exocytosis of IGF1 is required for sensory perception of smell in the olfactory bulb. Acts as a ligand for IGF1R. Binds to the alpha subunit of IGF1R, leading to the activation of the intrinsic tyrosine kinase activity which autophosphorylates tyrosine residues in the beta subunit thus initiating a cascade of down-stream signaling events leading to activation of the PI3K-AKT/PKB and the Ras-MAPK pathways. Binds to integrins ITGAV:ITGB3 and ITGA6:ITGB4. Its binding to integrins and subsequent ternary complex formation with integrins and IGFR1 are essential for IGF1 signaling. Induces the phosphorylation and activation of IGFR1, MAPK3/ERK1, MAPK1/ERK2 and AKT1. As part of the MAPK/ERK signaling pathway, acts as a negative regulator of apoptosis in cardiomyocytes via promotion of STUB1/CHIP-mediated ubiquitination and degradation of ICER-type isoforms of CREM. The sequence is that of Insulin-like growth factor 1 from Suncus murinus (Asian house shrew).